Consider the following 88-residue polypeptide: Small ribosomal subunit protein bS20 (88 aa).

This sequence belongs to the bacterial ribosomal protein bS20 family.

In terms of biological role, binds directly to 16S ribosomal RNA. The polypeptide is Small ribosomal subunit protein bS20 (Bartonella tribocorum (strain CIP 105476 / IBS 506)).